The following is a 424-amino-acid chain: MLAAGRRVACAVSGGVDSAVAALLLRRRGYQVTGVFMKNWDPLDEQGACSVDRDCEDAYRVCQKLDIPFHQVSYVKEYWNEVFSDLLKEYELGRTPNPDIVCNKHIKFNHFLHYAMDNLGADAIATGHYARTSLEDEEVFQQKHTKRPRELFRNRFEVRNTVKLLQGADLFKDQTFFLSQISQDALRKTIFPLGDLTKSFVRKIASEHGLHHVLKKKEACTTFPFQSMGVCFIGERNFEKFLLEYLEPQPGNFVSIEDKKVMGTHKGWFLYTIGQRARLAGLQGAWFVVDKDVSTGDIFVAPSTDHPALFRDLLRTNRVHWIAEEPPAELVRDKMMECHFRFRHQMALVPCVLTLNQDGSVWVTLVKPARALTPGQFAVFYKGDECLGSGKILRLGPSVFTMQQGRNREEGTKKEDIDKVEPAT.

Residues A11 to S18 and M37 contribute to the ATP site. Residues N97–D99 form an interaction with target base in tRNA region. Residue C102 is the Nucleophile of the active site. An intrachain disulfide couples C102 to C231. ATP is bound at residue G127. The interaction with tRNA stretch occupies residues K172–Q174. The active-site Cysteine persulfide intermediate is the C231. The segment at R343–H344 is interaction with tRNA. The segment at Q403–T424 is disordered. Residues R406–T424 show a composition bias toward basic and acidic residues.

Belongs to the MnmA/TRMU family.

It is found in the mitochondrion. It carries out the reaction 5-taurinomethyluridine(34) in tRNA + S-sulfanyl-L-cysteinyl-[protein] + AH2 + ATP = 5-taurinomethyl-2-thiouridine(34) in tRNA + L-cysteinyl-[protein] + A + AMP + diphosphate + H(+). Catalyzes the 2-thiolation of uridine at the wobble position (U34) of mitochondrial tRNA(Lys), tRNA(Glu) and tRNA(Gln). Required for the formation of 5-taurinomethyl-2-thiouridine (tm5s2U) of mitochondrial tRNA(Lys), tRNA(Glu), and tRNA(Gln) at the wobble position. ATP is required to activate the C2 atom of the wobble base. The polypeptide is Mitochondrial tRNA-specific 2-thiouridylase 1 (TRMU) (Gallus gallus (Chicken)).